The chain runs to 1107 residues: Rho GTPase-activating protein 45 (1107 aa).

A disordered region spans residues 1-99; it reads MFSRKKRELM…SPPESGEGPF (99 aa). Residues 37-55 are compositionally biased toward low complexity; it reads DSSNDLASSPPSNSSPVSS. The segment covering 56–66 has biased composition (polar residues); it reads GTLKRPSSLSR. Coiled-coil stretches lie at residues 103–132 and 363–485; these read EDISQLLGDVARFAERLEKLRDVVQDEELK and NMRR…QSDQ. Positions 261-524 constitute an F-BAR domain; the sequence is EDVDVILQRS…SSKLYDLGQQ (264 aa). Basic and acidic residues-rich tracts occupy residues 414–423, 434–444, and 573–588; these read NATRAEEEQS, RRAEEEAKNRA, and ENKEISGEERGVERRG. Disordered stretches follow at residues 414-444 and 564-595; these read NATRAEEEQSHSGTRSLDKKRRAEEEAKNRA and FNSQDIPSSENKEISGEERGVERRGGRGHQVH. The Phorbol-ester/DAG-type zinc finger occupies 671–716; the sequence is THRLRKLRTPSKCRECNSYVYFQGAECEECSLACHKKCLETLAIQC. The region spanning 730-942 is the Rho-GAP domain; it reads RDFSETALRS…TLIIFYSTIF (213 aa). The interval 981–1036 is disordered; sequence LTPEYQIPVFKEPGASTVESDSESDGAEDIPGTWKPQTTRGHLTKEASVTSAEDIP. A compositionally biased stretch (polar residues) spans 1015 to 1031; that stretch reads KPQTTRGHLTKEASVTS.

It localises to the cytoplasm. The protein localises to the cell projection. Its subcellular location is the ruffle membrane. Functionally, contains a GTPase activator for the Rho-type GTPases (RhoGAP) domain that would be able to negatively regulate the actin cytoskeleton as well as cell spreading. However, also contains N-terminally a BAR-domin which is able to play an autoinhibitory effect on this RhoGAP activity. The chain is Rho GTPase-activating protein 45 from Xenopus laevis (African clawed frog).